The following is a 247-amino-acid chain: Triosephosphate isomerase (247 aa).

8–10 (NWK) is a substrate binding site. The active-site Electrophile is His-94. The Proton acceptor role is filled by Glu-165. The substrate site is built by Gly-171 and Ser-210.

The protein belongs to the triosephosphate isomerase family. Homodimer.

The protein localises to the cytoplasm. The catalysed reaction is D-glyceraldehyde 3-phosphate = dihydroxyacetone phosphate. The protein operates within carbohydrate biosynthesis; gluconeogenesis. Its pathway is carbohydrate degradation; glycolysis; D-glyceraldehyde 3-phosphate from glycerone phosphate: step 1/1. Functionally, involved in the gluconeogenesis. Catalyzes stereospecifically the conversion of dihydroxyacetone phosphate (DHAP) to D-glyceraldehyde-3-phosphate (G3P). The chain is Triosephosphate isomerase from Aquifex aeolicus (strain VF5).